The following is a 114-amino-acid chain: U10-agatoxin-Ao1a (114 aa).

The signal sequence occupies residues 1–15 (MCVATCLCTFAYVLA). Positions 16–32 (KSDEGENLISKVEETQR) are excised as a propeptide. 5 disulfide bridges follow: Cys34-Cys53, Cys41-Cys59, Cys50-Cys86, Cys52-Cys76, and Cys61-Cys74. A disordered region spans residues 95 to 114 (GSQNPSLCKDPNPRRRRHGK).

The protein belongs to the neurotoxin 04 (omega-agtx) family. 03 (type II/III omega-agtx) subfamily. In terms of tissue distribution, expressed by the venom gland.

The protein localises to the secreted. Its function is as follows. Inhibits voltage-gated calcium channels (Cav). This chain is U10-agatoxin-Ao1a, found in Agelena orientalis (Funnel-web spider).